The following is a 342-amino-acid chain: Inactive chitinase-like protein 2 (342 aa).

The N-terminal stretch at 1-19 is a signal peptide; sequence MKEIVRALEGYGPPKDKAA. Residues 20 to 60 form the Chitin-binding type-1 domain; sequence EQCGWQAGGALCPGGLCCSQYGWCANTPEYCGSGCQSQCDG. Cystine bridges form between Cys-22–Cys-37, Cys-31–Cys-43, Cys-36–Cys-80, Cys-84–Cys-88, Cys-122–Cys-184, Cys-196–Cys-204, and Cys-301–Cys-333.

This sequence belongs to the glycosyl hydrolase 19 family. Chitinase class I subfamily.

In terms of biological role, inactive chitinase-like protein that does not exhibit hydrolytic activity toward chitin. Binds strongly to chitin and possesses antifungal activity toward the fungal pathogen Altenaria alternata in plate assays. Probably involved in defense against fungal pathogens through a mechanism that only involves carbohydrate binding. The polypeptide is Inactive chitinase-like protein 2 (Hevea brasiliensis (Para rubber tree)).